The primary structure comprises 179 residues: MNETLKEELLQSIREVKDYPKKGILFKDITTLLNYPKLFNKLIDTLKKRYLALNIDFIVGIEARGFILGSALAYALGVGFVPVRKKGKLPAHTLSQSYSLEYGSDSIEIHSDAFRGIKGVRVVLIDDLLATGGTALASLELIKALQAECIEACFLIGLKELPGIQLLEERVKTFCLLEC.

The protein belongs to the purine/pyrimidine phosphoribosyltransferase family. Homodimer.

The protein resides in the cytoplasm. It carries out the reaction AMP + diphosphate = 5-phospho-alpha-D-ribose 1-diphosphate + adenine. It functions in the pathway purine metabolism; AMP biosynthesis via salvage pathway; AMP from adenine: step 1/1. Functionally, catalyzes a salvage reaction resulting in the formation of AMP, that is energically less costly than de novo synthesis. In Helicobacter pylori (strain ATCC 700392 / 26695) (Campylobacter pylori), this protein is Adenine phosphoribosyltransferase.